A 441-amino-acid polypeptide reads, in one-letter code: MRLSQYFLPLLKENPKEAEIISHRLMLRAGMIRQQTSGIYSWLPLGKKVLDKICKIIREEQERAGAIEILMPTIQSADLWRESDRYDDYGLEMLRIKDRQKRDLLYGPTNEEMVTDIFRSYIRSYKDLPLNLYHIQWKFRDEIRPRFGVMRSREFLMKDAYSFDLDYEGSKISYNRMFVAYLRTFSCLGLKAIPMRADTGPIGGKLSHEFIILAETGESAIFCDKHFLELTVPDSSIDFSDKAILANIVKQWTSFYAATEEMHDEEEWAKISDNNRLSARGIEVGHIFHFGTKYSAPMGAKVMGQDGKEHLVSMGSYGIGPSRLVAAVIEASHDENGIIWPKSIAPFDFGIINMKPDDEKCTHACETLYKGLRYAGFDPLLDDRNERPGSKFATMDLIGLPTQIIVGPKSVAQNEVEIKDRKTGIKKSLTVENVLNQFSVI.

Belongs to the class-II aminoacyl-tRNA synthetase family. ProS type 2 subfamily. As to quaternary structure, homodimer.

The protein resides in the cytoplasm. It catalyses the reaction tRNA(Pro) + L-proline + ATP = L-prolyl-tRNA(Pro) + AMP + diphosphate. Its function is as follows. Catalyzes the attachment of proline to tRNA(Pro) in a two-step reaction: proline is first activated by ATP to form Pro-AMP and then transferred to the acceptor end of tRNA(Pro). This chain is Proline--tRNA ligase, found in Bartonella henselae (strain ATCC 49882 / DSM 28221 / CCUG 30454 / Houston 1) (Rochalimaea henselae).